Here is a 213-residue protein sequence, read N- to C-terminus: mRNA-decapping protein OPG121 (213 aa).

N(7)-methyl-GTP contacts are provided by Glu16 and Arg50. One can recognise a Nudix hydrolase domain in the interval 30–209 (KDTHVFAACI…EYLSYIYNIL (180 aa)). The Nudix box signature appears at 111 to 132 (GKLDKKESIKDCLRRELKEESD). Mg(2+) contacts are provided by Glu126 and Glu130. Asp151 is a N(7)-methyl-GTP binding site. Residue Glu183 coordinates Mg(2+).

Belongs to the Nudix hydrolase family. In terms of assembly, interacts with the late transcription elongation factor VLTF-4/OPG110. Interacts with the late transcription factors VLTF-1. Mg(2+) is required as a cofactor. The cofactor is Mn(2+).

The catalysed reaction is a 5'-end (N(7)-methyl 5'-triphosphoguanosine)-guanosine in mRNA + H2O = a 5'-end phospho-guanosine in mRNA + N(7)-methyl-GDP + 2 H(+). Its function is as follows. Acts with RNA polymerase to initiate transcription from late gene promoters. The chain is mRNA-decapping protein OPG121 (OPG121) from Cynomys gunnisoni (Gunnison's prairie dog).